We begin with the raw amino-acid sequence, 362 residues long: Adenosine deaminase (362 aa).

His-19 and His-21 together coordinate Zn(2+). Residues His-21, Asp-23, and Gly-181 each coordinate substrate. His-208 serves as a coordination point for Zn(2+). The Proton donor role is filled by Glu-211. Asp-300 provides a ligand contact to Zn(2+).

It belongs to the metallo-dependent hydrolases superfamily. Adenosine and AMP deaminases family. Adenosine deaminase subfamily. Zn(2+) is required as a cofactor.

It carries out the reaction adenosine + H2O + H(+) = inosine + NH4(+). The catalysed reaction is 2'-deoxyadenosine + H2O + H(+) = 2'-deoxyinosine + NH4(+). In terms of biological role, catalyzes the hydrolytic deamination of adenosine and 2-deoxyadenosine. This chain is Adenosine deaminase, found in Mycobacterium ulcerans (strain Agy99).